The chain runs to 618 residues: Two-component response regulator-like APRR1 (618 aa).

One can recognise a Response regulatory domain in the interval 20–138 (RILLCDNDST…ELLNLWTHMW (119 aa)). Polar residues-rich tracts occupy residues 161–174 (SDQS…TNLF), 187–200 (NPQR…ENEW), 246–257 (RNSNPAQFSSAP), 324–334 (PKSTVLRTNGQ), and 375–389 (TEQY…QNGA). Disordered stretches follow at residues 161 to 200 (SDQS…ENEW), 239 to 260 (SHHE…PKKS), 316 to 338 (TKQA…DPPL), 368 to 395 (QAHR…PHSL), and 573 to 618 (VRKM…ALGT). A CCT domain is found at 533 to 575 (REEALLKFRRKRNQRCFDKKIRYVNRKRLAERRPRVKGQFVRK). Residues 588 to 610 (DSADYDDEEEEEEEEEEENRDSS) adopt a coiled-coil conformation. A compositionally biased stretch (acidic residues) spans 590–606 (ADYDDEEEEEEEEEEEN).

Belongs to the ARR-like family. Interacts with PIF1, PIL2, PIF3, PIF4, PIL5, PIL6, ABI3 (via C-terminus), ADO1/ZTL, ADO2, APRR3 and TCP21/CHE. Both the phosphorylated and the dephosphorylated forms interact with ADO1/ZLT. Phosphorylated; during the day. Phosphorylation is required for optimal interaction with APRR3. In terms of tissue distribution, expressed in leaves, flowers and siliques. Restricted to the vasculature.

The protein resides in the nucleus. Its function is as follows. Controls photoperiodic flowering response. Component of the circadian clock. Expression of several members of the ARR-like family is controlled by circadian rhythm. The particular coordinated sequential expression of APRR9, APRR7, APRR5, APRR3 and APPR1 result to circadian waves that may be at the basis of the endogenous circadian clock. Positive regulator of CCA1 and LHY expression. The polypeptide is Two-component response regulator-like APRR1 (APRR1) (Arabidopsis thaliana (Mouse-ear cress)).